We begin with the raw amino-acid sequence, 244 residues long: 2,5-diamino-6-ribosylamino-4(3H)-pyrimidinone 5'-phosphate reductase (244 aa).

Residues Thr-74, Asp-78, Ile-160, and 183-187 (GSHVI) each bind NADP(+).

The protein belongs to the HTP reductase family. As to quaternary structure, homodimer.

It catalyses the reaction 2,5-diamino-6-(1-D-ribitylamino)pyrimidin-4(3H)-one 5'-phosphate + NADP(+) = 2,5-diamino-6-(1-D-ribosylamino)pyrimidin-4(3H)-one 5'-phosphate + NADPH + H(+). The catalysed reaction is 2,5-diamino-6-(1-D-ribitylamino)pyrimidin-4(3H)-one 5'-phosphate + NAD(+) = 2,5-diamino-6-(1-D-ribosylamino)pyrimidin-4(3H)-one 5'-phosphate + NADH + H(+). It functions in the pathway cofactor biosynthesis; riboflavin biosynthesis. In terms of biological role, catalyzes an early step in riboflavin biosynthesis, the NADPH-dependent reduction of the ribose side chain of 2,5-diamino-6-ribosylamino-4(3H)-pyrimidinone 5'-phosphate, yielding 2,5-diamino-6-ribitylamino-4(3H)-pyrimidinone 5'-phosphate. The polypeptide is 2,5-diamino-6-ribosylamino-4(3H)-pyrimidinone 5'-phosphate reductase (RIB7) (Candida glabrata (strain ATCC 2001 / BCRC 20586 / JCM 3761 / NBRC 0622 / NRRL Y-65 / CBS 138) (Yeast)).